The chain runs to 200 residues: Coiled-coil domain-containing protein 85B (200 aa).

The stretch at 57–84 forms a coiled coil; that stretch reads LQGHLLEIRELKVINQRLQEENQELRDL. Residues 178-188 are compositionally biased toward low complexity; sequence DGSSSTGSVGS. Positions 178–200 are disordered; it reads DGSSSTGSVGSPDQLHLVCSPDD.

It belongs to the CCDC85 family.

Its subcellular location is the nucleus. The protein resides in the cytoplasm. It is found in the cytoskeleton. The protein localises to the microtubule organizing center. It localises to the centrosome. Its subcellular location is the cell junction. The protein resides in the adherens junction. In terms of biological role, functions as a transcriptional repressor. May inhibit the activity of CTNNB1 in a TP53-dependent manner and thus regulate cell growth. May function in adipocyte differentiation, negatively regulating mitotic clonal expansion. Plays a role in cell-cell adhesion and epithelium development through its interaction with proteins of the beta-catenin family. This chain is Coiled-coil domain-containing protein 85B (ccdc85b), found in Danio rerio (Zebrafish).